The following is a 109-amino-acid chain: uncharacterized protein (109 aa).

The chain crosses the membrane as a helical span at residues 78–98 (YTCIMYIGLLCMFVLLYMTVI).

The protein resides in the membrane. This is an uncharacterized protein from Saccharomyces cerevisiae (strain ATCC 204508 / S288c) (Baker's yeast).